We begin with the raw amino-acid sequence, 37 residues long: EDKCSPSGAICSGFGPPEQCCSGACVPHPILRIFVCQ.

Intrachain disulfides connect cysteine 4/cysteine 21, cysteine 11/cysteine 25, and cysteine 20/cysteine 36.

In terms of biological role, trypsin inhibitor. The polypeptide is Trypsin inhibitor 3 (Spinacia oleracea (Spinach)).